The chain runs to 851 residues: DNA mismatch repair protein MutS (851 aa).

614–621 (GPNMGGKS) provides a ligand contact to ATP.

Belongs to the DNA mismatch repair MutS family.

This protein is involved in the repair of mismatches in DNA. It is possible that it carries out the mismatch recognition step. This protein has a weak ATPase activity. The sequence is that of DNA mismatch repair protein MutS from Yersinia enterocolitica serotype O:8 / biotype 1B (strain NCTC 13174 / 8081).